A 270-amino-acid chain; its full sequence is Regulatory protein RecX (270 aa).

Belongs to the RecX family.

The protein localises to the cytoplasm. Functionally, modulates RecA activity. In Bacillus cereus (strain ZK / E33L), this protein is Regulatory protein RecX.